A 198-amino-acid chain; its full sequence is Nudix hydrolase 21, chloroplastic (198 aa).

The transit peptide at 1 to 37 (MISLFISNFSNLSNLSPTFDNMNMNIPSKKIVPVPTP) directs the protein to the chloroplast. One can recognise a Nudix hydrolase domain in the interval 59–191 (GYRQVVGCVP…WMREALEAFI (133 aa)). Residues 98 to 119 (GGWEIDESIEEAALRETIEEAG) carry the Nudix box motif. Residues Glu-113 and Glu-117 each coordinate Mg(2+).

It belongs to the Nudix hydrolase family. Mg(2+) is required as a cofactor. The cofactor is Mn(2+). Expressed in roots, leaves, stems and inflorescences.

The protein resides in the plastid. It is found in the chloroplast. In terms of biological role, probably mediates the hydrolysis of some nucleoside diphosphate derivatives. The polypeptide is Nudix hydrolase 21, chloroplastic (NUDT21) (Arabidopsis thaliana (Mouse-ear cress)).